The primary structure comprises 709 residues: Fatty acid oxidation complex subunit alpha (709 aa).

The interval 1–188 (MEKTFNLTRR…KMGLVNDVVP (188 aa)) is enoyl-CoA hydratase. Positions 308–709 (RKVKKAVILG…EMAAEKTRFF (402 aa)) are 3-hydroxyacyl-CoA dehydrogenase.

This sequence in the N-terminal section; belongs to the enoyl-CoA hydratase/isomerase family. In the central section; belongs to the 3-hydroxyacyl-CoA dehydrogenase family. Heterotetramer of two alpha chains (FadJ) and two beta chains (FadI).

It is found in the cytoplasm. It carries out the reaction a (3S)-3-hydroxyacyl-CoA = a (2E)-enoyl-CoA + H2O. The catalysed reaction is a 4-saturated-(3S)-3-hydroxyacyl-CoA = a (3E)-enoyl-CoA + H2O. It catalyses the reaction a (3S)-3-hydroxyacyl-CoA + NAD(+) = a 3-oxoacyl-CoA + NADH + H(+). The enzyme catalyses (3S)-3-hydroxybutanoyl-CoA = (3R)-3-hydroxybutanoyl-CoA. The protein operates within lipid metabolism; fatty acid beta-oxidation. In terms of biological role, catalyzes the formation of a hydroxyacyl-CoA by addition of water on enoyl-CoA. Also exhibits 3-hydroxyacyl-CoA epimerase and 3-hydroxyacyl-CoA dehydrogenase activities. This chain is Fatty acid oxidation complex subunit alpha, found in Shewanella sp. (strain MR-7).